Consider the following 183-residue polypeptide: ATP synthase subunit b, chloroplastic (183 aa).

The chain crosses the membrane as a helical span at residues 25-45 (DILATNLINLTVVVGVLIFFG).

It belongs to the ATPase B chain family. In terms of assembly, F-type ATPases have 2 components, F(1) - the catalytic core - and F(0) - the membrane proton channel. F(1) has five subunits: alpha(3), beta(3), gamma(1), delta(1), epsilon(1). F(0) has four main subunits: a(1), b(1), b'(1) and c(10-14). The alpha and beta chains form an alternating ring which encloses part of the gamma chain. F(1) is attached to F(0) by a central stalk formed by the gamma and epsilon chains, while a peripheral stalk is formed by the delta, b and b' chains.

The protein localises to the plastid. The protein resides in the chloroplast thylakoid membrane. Its function is as follows. F(1)F(0) ATP synthase produces ATP from ADP in the presence of a proton or sodium gradient. F-type ATPases consist of two structural domains, F(1) containing the extramembraneous catalytic core and F(0) containing the membrane proton channel, linked together by a central stalk and a peripheral stalk. During catalysis, ATP synthesis in the catalytic domain of F(1) is coupled via a rotary mechanism of the central stalk subunits to proton translocation. Component of the F(0) channel, it forms part of the peripheral stalk, linking F(1) to F(0). The polypeptide is ATP synthase subunit b, chloroplastic (Zea mays (Maize)).